The sequence spans 129 residues: S-adenosylmethionine decarboxylase proenzyme (129 aa).

Ser63 serves as the catalytic Schiff-base intermediate with substrate; via pyruvic acid. Ser63 bears the Pyruvic acid (Ser); by autocatalysis mark. The active-site Proton acceptor; for processing activity is His68. Cys83 functions as the Proton donor; for catalytic activity in the catalytic mechanism.

It belongs to the prokaryotic AdoMetDC family. Type 1 subfamily. As to quaternary structure, heterotetramer of two alpha and two beta chains arranged as a dimer of alpha/beta heterodimers. It depends on pyruvate as a cofactor. Is synthesized initially as an inactive proenzyme. Formation of the active enzyme involves a self-maturation process in which the active site pyruvoyl group is generated from an internal serine residue via an autocatalytic post-translational modification. Two non-identical subunits are generated from the proenzyme in this reaction, and the pyruvate is formed at the N-terminus of the alpha chain, which is derived from the carboxyl end of the proenzyme. The post-translation cleavage follows an unusual pathway, termed non-hydrolytic serinolysis, in which the side chain hydroxyl group of the serine supplies its oxygen atom to form the C-terminus of the beta chain, while the remainder of the serine residue undergoes an oxidative deamination to produce ammonia and the pyruvoyl group blocking the N-terminus of the alpha chain.

It carries out the reaction S-adenosyl-L-methionine + H(+) = S-adenosyl 3-(methylsulfanyl)propylamine + CO2. The protein operates within amine and polyamine biosynthesis; S-adenosylmethioninamine biosynthesis; S-adenosylmethioninamine from S-adenosyl-L-methionine: step 1/1. In terms of biological role, catalyzes the decarboxylation of S-adenosylmethionine to S-adenosylmethioninamine (dcAdoMet), the propylamine donor required for the synthesis of the polyamines spermine and spermidine from the diamine putrescine. This Shouchella clausii (strain KSM-K16) (Alkalihalobacillus clausii) protein is S-adenosylmethionine decarboxylase proenzyme.